Consider the following 1392-residue polypeptide: L-2-aminoadipate reductase (1392 aa).

Lys541 is covalently cross-linked (Glycyl lysine isopeptide (Lys-Gly) (interchain with G-Cter in ubiquitin)). One can recognise a Carrier domain in the interval 843–920 (SQFTNVEREV…AFAAEIDRIK (78 aa)). Ser880 carries the post-translational modification O-(pantetheine 4'-phosphoryl)serine. Lys1276 participates in a covalent cross-link: Glycyl lysine isopeptide (Lys-Gly) (interchain with G-Cter in ubiquitin).

The protein belongs to the ATP-dependent AMP-binding enzyme family. Requires pantetheine 4'-phosphate as cofactor.

It catalyses the reaction (S)-2-amino-6-oxohexanoate + NADP(+) + H2O = L-2-aminoadipate + NADPH + 2 H(+). The catalysed reaction is (S)-2-amino-6-oxohexanoate + NAD(+) + H2O = L-2-aminoadipate + NADH + 2 H(+). The enzyme catalyses (S)-2-amino-6-oxohexanoate + AMP + diphosphate + NADP(+) = L-2-aminoadipate + ATP + NADPH + H(+). It functions in the pathway amino-acid biosynthesis; L-lysine biosynthesis via AAA pathway; L-lysine from L-alpha-aminoadipate (fungal route): step 1/3. In terms of biological role, catalyzes the activation of alpha-aminoadipate by ATP-dependent adenylation and the reduction of activated alpha-aminoadipate by NADPH. The activated alpha-aminoadipate is bound to the phosphopantheinyl group of the enzyme itself before it is reduced to (S)-2-amino-6-oxohexanoate. The polypeptide is L-2-aminoadipate reductase (LYS2) (Saccharomyces cerevisiae (strain ATCC 204508 / S288c) (Baker's yeast)).